We begin with the raw amino-acid sequence, 495 residues long: MKYSAKNTALSQIDSNIILAVFEDGELSPTAMQFDQLSQGYLTRLIQVGEVSGKQGQVLILRDIPNCQAQRIFIVGCGKKDKITERQYKQIIQKTIQTILETQASEVVSFLNEIELKNRDIHWNIRFAIETIEASFYQFDAFKTKKGDENSVLNEFIFDVQPELQQDALLAITYAQAIALGVKHAKDIANCPPNICNPTYLAEQAQSLAKHSNLINVQVLGEKEMAELNMFSYLAVSQGSANEAKMSVIEYRNHPDKNAKPIVLVGKGLTFDAGGISLKPADSMDEMKYDMCGAASVFGVMYALATLQLPLNVIGVLAGCENLPDGNSYRPGDILTTMSGLTVEVLNTDAEGRLVLCDALTYVERFNPELVIDVATLTGACVVALGQHNSGLIATDEKLAEKLLNAAEETTDKAWRLPLSEEYQEQLKSNFADLANIGGRWGGAITAGAFLANFTKNYPWAHLDIAGTAWLQGTNKGATGRPVSLLTQFLINQSK.

Residues lysine 267 and aspartate 272 each contribute to the Mn(2+) site. Lysine 279 is an active-site residue. Positions 290, 349, and 351 each coordinate Mn(2+). Arginine 353 is a catalytic residue.

This sequence belongs to the peptidase M17 family. Mn(2+) serves as cofactor.

The protein resides in the cytoplasm. The catalysed reaction is Release of an N-terminal amino acid, Xaa-|-Yaa-, in which Xaa is preferably Leu, but may be other amino acids including Pro although not Arg or Lys, and Yaa may be Pro. Amino acid amides and methyl esters are also readily hydrolyzed, but rates on arylamides are exceedingly low.. It catalyses the reaction Release of an N-terminal amino acid, preferentially leucine, but not glutamic or aspartic acids.. Presumably involved in the processing and regular turnover of intracellular proteins. Catalyzes the removal of unsubstituted N-terminal amino acids from various peptides. The sequence is that of Probable cytosol aminopeptidase from Histophilus somni (strain 129Pt) (Haemophilus somnus).